The chain runs to 1851 residues: Voltage-dependent calcium channel type A subunit alpha-1 (1851 aa).

Over 1–38 the chain is Cytoplasmic; it reads MGGPKKEENPPGGGPTSLFILTEDNPIRKYTRFIIEWP. An I repeat occupies 25-316; that stretch reads NPIRKYTRFI…LVLGVLSGEF (292 aa). The chain crosses the membrane as a helical span at residues 39-57; sequence PFEYAVLLTIIANCVVLAL. Residues 58-75 lie on the Extracellular side of the membrane; the sequence is EEHLPGGDKTVLAQKLEK. A helical transmembrane segment spans residues 76 to 95; sequence TEAYFLCIFCVEASLKILAL. Topologically, residues 96–107 are cytoplasmic; it reads GLVLHKHSYLRN. Residues 108 to 128 form a helical membrane-spanning segment; the sequence is IWNIMDFFVVVTGFMTQYPQI. At 129 to 133 the chain is on the extracellular side; sequence GPEVD. A helical membrane pass occupies residues 134 to 152; that stretch reads LRTLRAIRVLRPLKLVSGI. The Cytoplasmic portion of the chain corresponds to 153 to 171; the sequence is PSLQVVLKSIIKAMAPLLQ. Residues 172–191 traverse the membrane as a helical segment; it reads IGLLVLFAIVIFAIIGLEFY. At 192–288 the chain is on the extracellular side; the sequence is SGALHKTCYS…WTNDALGSAF (97 aa). Asparagine 234 and asparagine 235 each carry an N-linked (GlcNAc...) asparagine glycan. The helical transmembrane segment at 289–313 threads the bilayer; sequence NWIYFVPLIVIGSFFMLNLVLGVLS. At 314–441 the chain is on the cytoplasmic side; it reads GEFSNERNRV…FWIRHTVKTQ (128 aa). A disordered region spans residues 381 to 417; it reads RKKLKSLGKSKSTDTEEEEAEEDYGDDGYLKTRSKPQ. Positions 395–406 are enriched in acidic residues; the sequence is TEEEEAEEDYGD. Residues 427-670 form an II repeat; that stretch reads EKRFRFWIRH…VFLAIAVDNL (244 aa). Residues 442 to 460 form a helical membrane-spanning segment; sequence WFYWFVIVLVFLNTVCVAV. At 461–475 the chain is on the extracellular side; sequence EHYGQPSFLTEFLYY. A helical membrane pass occupies residues 476–495; it reads AEFIFLGLFMSEMFIKMYAL. Over 496-503 the chain is Cytoplasmic; it reads GPRIYFES. The helical transmembrane segment at 504–522 threads the bilayer; that stretch reads SFNRFDCVVISGSIFEVIW. Topologically, residues 523–531 are extracellular; the sequence is SEVKGGSFG. Residues 532–550 form a helical membrane-spanning segment; the sequence is LSVLRALRLLRIFKVTKYW. At 551–569 the chain is on the cytoplasmic side; that stretch reads SSLRNLVISLLNSMRSIIS. The chain crosses the membrane as a helical span at residues 570 to 589; that stretch reads LLFLLFLFILIFALLGMQLF. The Extracellular segment spans residues 590 to 642; sequence GGQFNLPGGTPETNFNTFPIALLTVFQILTGEDWNEVMYQGIISQGGAQKGMI. The chain crosses the membrane as a helical span at residues 643-667; sequence YSIYFIVLVLFGNYTLLNVFLAIAV. The Cytoplasmic portion of the chain corresponds to 668-767; sequence DNLANAQELT…IRRGAHWVVN (100 aa). The interval 710–741 is disordered; the sequence is ENGDGAVAPSKSKGKKKEEEKKEEEEVTEGPK. The III repeat unit spans residues 762 to 1049; the sequence is AHWVVNLPYF…IITFQEQGEA (288 aa). A helical membrane pass occupies residues 768-786; sequence LPYFDFFIMVVISMSSIAL. Residues 787–802 are Extracellular-facing; that stretch reads AAEDPVRENSRRNKIL. The helical transmembrane segment at 803 to 822 threads the bilayer; the sequence is NYFDYAFTGVFTIEMLLKIV. Topologically, residues 823–834 are cytoplasmic; it reads DLGVILHPGSYL. A helical membrane pass occupies residues 835–853; sequence REFWNIMDAVVVICAAVSF. Over 854–866 the chain is Extracellular; the sequence is GFDMSGSSAGQNL. An N-linked (GlcNAc...) asparagine glycan is attached at asparagine 865. A helical transmembrane segment spans residues 867-885; it reads STIKSLRVLRVLRPLKTIK. At 886–904 the chain is on the cytoplasmic side; the sequence is RVPKLKAVFDCVVNSLKNV. Residues 905-924 traverse the membrane as a helical segment; it reads VNILIVYILFQFIFSVIGVQ. Over 925–1013 the chain is Extracellular; sequence LFNGKFFYCT…EDRGPIQNFR (89 aa). A helical membrane pass occupies residues 1014-1038; sequence IEMSIFYIVYFIVFPFFFVNIFVAL. Topologically, residues 1039-1093 are cytoplasmic; sequence IIITFQEQGEAELQDGEIDKNQKSCIDFTIGARPLERYMPKNRNTFKYKVWRIVV. The stretch at 1086–1347 is one IV repeat; sequence YKVWRIVVST…DNFDYLTRDS (262 aa). Residues 1094 to 1122 form a helical membrane-spanning segment; that stretch reads STPFEYFIMMLIVFNTLLLMMKYHNQGDM. The Extracellular segment spans residues 1123 to 1127; the sequence is YEKSL. Residues 1128–1147 traverse the membrane as a helical segment; sequence KYINMGFTGMFSVETVLKII. The Cytoplasmic portion of the chain corresponds to 1148 to 1155; sequence GFGVKNFF. A helical transmembrane segment spans residues 1156 to 1174; the sequence is KDPWNIFDLITVLGSIVDA. The Extracellular segment spans residues 1175 to 1184; the sequence is LWMEFGHDDS. The helical transmembrane segment at 1185–1203 threads the bilayer; the sequence is NSINVGFLRLFRAARLIKL. The Cytoplasmic segment spans residues 1204–1222; that stretch reads LRQGYTIRILLWTFVQSFK. A helical membrane pass occupies residues 1223-1242; sequence ALPYVCLLIAMLFFIYAIIG. The Extracellular segment spans residues 1243 to 1308; that stretch reads MQVFGNIKLG…DAEKAPGEYC (66 aa). The tract at residues 1306-1348 is phenylalkylamine binding; it reads EYCGSTLAYAYFVSFIFFCSFLMLNLFVAVIMDNFDYLTRDSS. A helical membrane pass occupies residues 1309-1333; that stretch reads GSTLAYAYFVSFIFFCSFLMLNLFV. Residues 1334-1851 are Cytoplasmic-facing; sequence AVIMDNFDYL…HSDSDEEDWC (518 aa). Residues 1353–1388 form the EF-hand domain; sequence HHLDEFVRIWAEYDPNATGKIHYTEMYDMLKNMDPP. Aspartate 1366, asparagine 1368, threonine 1370, lysine 1372, and glutamate 1377 together coordinate Ca(2+). 4 disordered regions span residues 1513–1572, 1588–1653, 1685–1764, and 1823–1851; these read DASR…HHDI, TRHP…SPAR, RAGI…DRDR, and VLPS…EDWC. A compositionally biased stretch (basic residues) spans 1589–1600; that stretch reads RHPRHGNSHPRY. A compositionally biased stretch (low complexity) spans 1604-1619; sequence SWSASTSPARSPSPSR. Composition is skewed to polar residues over residues 1637–1649 and 1698–1710; these read YGTT…SRSP and KPST…TNIN. A compositionally biased stretch (basic and acidic residues) spans 1734-1764; it reads HHRDLLRDPRDMYYSSRERERDRERLRDRDR.

This sequence belongs to the calcium channel alpha-1 subunit (TC 1.A.1.11) family. In terms of tissue distribution, expressed widely in the embryonic nervous system.

It is found in the membrane. In terms of biological role, voltage-sensitive calcium channels (VSCC) mediate the entry of calcium ions into excitable cells and are also involved in a variety of calcium-dependent processes, including muscle contraction, neurotransmitter release, gene expression, cell motility, cell division and cell death. Probably encodes a dihydropyridine-insensitive current. Vital for survival to adulthood. The polypeptide is Voltage-dependent calcium channel type A subunit alpha-1 (cac) (Drosophila melanogaster (Fruit fly)).